We begin with the raw amino-acid sequence, 97 residues long: uncharacterized protein (97 aa).

This is an uncharacterized protein from Haemophilus influenzae (strain ATCC 51907 / DSM 11121 / KW20 / Rd).